Reading from the N-terminus, the 174-residue chain is Putative FAS1 domain-containing protein 096L (174 aa).

An FAS1 domain is found at 36–171 (PDTLWSKLNE…GIIHLMEEVY (136 aa)).

This chain is Putative FAS1 domain-containing protein 096L, found in Acheta domesticus (House cricket).